The primary structure comprises 345 residues: Phosphate acyltransferase (345 aa).

This sequence belongs to the PlsX family. In terms of assembly, homodimer. Probably interacts with PlsY.

It localises to the cytoplasm. It carries out the reaction a fatty acyl-[ACP] + phosphate = an acyl phosphate + holo-[ACP]. It functions in the pathway lipid metabolism; phospholipid metabolism. Functionally, catalyzes the reversible formation of acyl-phosphate (acyl-PO(4)) from acyl-[acyl-carrier-protein] (acyl-ACP). This enzyme utilizes acyl-ACP as fatty acyl donor, but not acyl-CoA. This chain is Phosphate acyltransferase, found in Levilactobacillus brevis (strain ATCC 367 / BCRC 12310 / CIP 105137 / JCM 1170 / LMG 11437 / NCIMB 947 / NCTC 947) (Lactobacillus brevis).